The primary structure comprises 530 residues: Methionine--tRNA ligase (530 aa).

A 'HIGH' region motif is present at residues 18–28 (YYVNDVPHIGS). Zn(2+) is bound by residues Cys-133, Cys-136, Cys-151, and His-154. Positions 307 to 311 (KMGKS) match the 'KMSKS' region motif. Lys-310 is an ATP binding site.

Belongs to the class-I aminoacyl-tRNA synthetase family. MetG type 2A subfamily. Monomer. Zn(2+) serves as cofactor.

The protein localises to the cytoplasm. It catalyses the reaction tRNA(Met) + L-methionine + ATP = L-methionyl-tRNA(Met) + AMP + diphosphate. Is required not only for elongation of protein synthesis but also for the initiation of all mRNA translation through initiator tRNA(fMet) aminoacylation. The polypeptide is Methionine--tRNA ligase (Nostoc sp. (strain PCC 7120 / SAG 25.82 / UTEX 2576)).